A 156-amino-acid polypeptide reads, in one-letter code: MSRRTRAILRPVTADPLYASRLVTMMTNKLMKEGKKATAERILYSALERVQERTGREPLDVFNQAVLNCTPRIEVKARRVGGATYQVPMEVRQERGTSLALRWLVQFSRKRSGKSMVDKLSNELMDAANDTGSAVRKREETHRMAEANKAFAHYRY.

The protein belongs to the universal ribosomal protein uS7 family. As to quaternary structure, part of the 30S ribosomal subunit. Contacts proteins S9 and S11.

Its function is as follows. One of the primary rRNA binding proteins, it binds directly to 16S rRNA where it nucleates assembly of the head domain of the 30S subunit. Is located at the subunit interface close to the decoding center, probably blocks exit of the E-site tRNA. This is Small ribosomal subunit protein uS7 from Gloeobacter violaceus (strain ATCC 29082 / PCC 7421).